A 121-amino-acid polypeptide reads, in one-letter code: Large ribosomal subunit protein bL12 (121 aa).

Belongs to the bacterial ribosomal protein bL12 family. In terms of assembly, homodimer. Part of the ribosomal stalk of the 50S ribosomal subunit. Forms a multimeric L10(L12)X complex, where L10 forms an elongated spine to which 2 to 4 L12 dimers bind in a sequential fashion. Binds GTP-bound translation factors.

Functionally, forms part of the ribosomal stalk which helps the ribosome interact with GTP-bound translation factors. Is thus essential for accurate translation. The chain is Large ribosomal subunit protein bL12 from Pediococcus pentosaceus (strain ATCC 25745 / CCUG 21536 / LMG 10740 / 183-1w).